Reading from the N-terminus, the 477-residue chain is Bifunctional protein HldE (477 aa).

Residues 1–318 are ribokinase; it reads MKVTLPDFRR…ENAIRGRADT (318 aa). ATP is bound at residue 195-198; sequence NLSE. Residue Asp264 is part of the active site. Positions 344-477 are cytidylyltransferase; it reads MTNGVFDILH…INIIRQGQND (134 aa).

This sequence in the N-terminal section; belongs to the carbohydrate kinase PfkB family. It in the C-terminal section; belongs to the cytidylyltransferase family. In terms of assembly, homodimer.

The catalysed reaction is D-glycero-beta-D-manno-heptose 7-phosphate + ATP = D-glycero-beta-D-manno-heptose 1,7-bisphosphate + ADP + H(+). It catalyses the reaction D-glycero-beta-D-manno-heptose 1-phosphate + ATP + H(+) = ADP-D-glycero-beta-D-manno-heptose + diphosphate. It functions in the pathway nucleotide-sugar biosynthesis; ADP-L-glycero-beta-D-manno-heptose biosynthesis; ADP-L-glycero-beta-D-manno-heptose from D-glycero-beta-D-manno-heptose 7-phosphate: step 1/4. Its pathway is nucleotide-sugar biosynthesis; ADP-L-glycero-beta-D-manno-heptose biosynthesis; ADP-L-glycero-beta-D-manno-heptose from D-glycero-beta-D-manno-heptose 7-phosphate: step 3/4. Functionally, catalyzes the phosphorylation of D-glycero-D-manno-heptose 7-phosphate at the C-1 position to selectively form D-glycero-beta-D-manno-heptose-1,7-bisphosphate. Its function is as follows. Catalyzes the ADP transfer from ATP to D-glycero-beta-D-manno-heptose 1-phosphate, yielding ADP-D-glycero-beta-D-manno-heptose. The protein is Bifunctional protein HldE of Edwardsiella ictaluri (strain 93-146).